Consider the following 117-residue polypeptide: Ig heavy chain V region UPC10 (117 aa).

The region spanning 1-116 (EVKLLESGGG…WGQVTTLTVS (116 aa)) is the Ig-like domain.

The polypeptide is Ig heavy chain V region UPC10 (Mus musculus (Mouse)).